The chain runs to 894 residues: Translation initiation factor IF-2 (894 aa).

A disordered region spans residues 52 to 301; that stretch reads DRGAAPNKLT…RRPSTLTQGF (250 aa). The span at 68-82 shows a compositional bias: polar residues; sequence STLNIPSTGGKSKSV. Positions 107–154 are enriched in basic and acidic residues; the sequence is EQARREAEELAQHQVQRDAEEKAKRAAEDKAKREAAEQAKRVAAESDK. Residues 155-168 show a composition bias toward polar residues; that stretch reads LTNQQTNTMTKSPQ. 2 stretches are compositionally biased toward basic and acidic residues: residues 171 to 214 and 237 to 254; these read EKAR…ERGG and HAREAEDENDRKVEGDRR. Over residues 255–269 the composition is skewed to basic residues; the sequence is SRTRGGKATKQKKTS. Positions 270-283 are enriched in basic and acidic residues; the sequence is RLSESKADREEARA. The 170-residue stretch at 393 to 562 folds into the tr-type G domain; the sequence is SRAPVVTIMG…LLQAEVLELK (170 aa). The segment at 402-409 is G1; the sequence is GHVDHGKT. A GTP-binding site is contributed by 402-409; that stretch reads GHVDHGKT. Positions 427-431 are G2; sequence GITQH. Positions 448 to 451 are G3; that stretch reads DTPG. Residues 448-452 and 502-505 each bind GTP; these read DTPGH and NKID. The interval 502 to 505 is G4; it reads NKID. The G5 stretch occupies residues 538–540; the sequence is SAK.

This sequence belongs to the TRAFAC class translation factor GTPase superfamily. Classic translation factor GTPase family. IF-2 subfamily.

The protein resides in the cytoplasm. Its function is as follows. One of the essential components for the initiation of protein synthesis. Protects formylmethionyl-tRNA from spontaneous hydrolysis and promotes its binding to the 30S ribosomal subunits. Also involved in the hydrolysis of GTP during the formation of the 70S ribosomal complex. The sequence is that of Translation initiation factor IF-2 from Sodalis glossinidius (strain morsitans).